A 485-amino-acid chain; its full sequence is Aprataxin and PNK-like factor (485 aa).

The FHA-like domain maps to Met1–Glu84. Phosphoserine; by ATM is present on Ser92. The disordered stretch occupies residues Glu103–Glu156. At Ser125 the chain carries Phosphoserine. The KBM signature appears at Arg157–Leu166. Residues Gly206–Val348 form a disordered region. Polar residues-rich tracts occupy residues Ser212–Gln223, Ser237–Ser249, and Lys286–Ser309. Positions Phe310–Pro319 are enriched in basic and acidic residues. A glycoprotein is bound by residues Arg350, Tyr355, Tyr360, and Arg361. The PBZ-type 1 zinc finger occupies Thr351–His372. Residues Gly380–Asp390 form a flexible linker region. A PBZ-type 2 zinc finger spans residues Pro393–His414. Residues Tyr397, Tyr402, and Arg403 each contribute to the a glycoprotein site. The segment at Arg420–Met470 is disordered. The span at Phe441–Asp469 shows a compositional bias: acidic residues. The NAP1L motif signature appears at Tyr449 to Leu473.

This sequence belongs to the APLF family. As to quaternary structure, interacts with LIG4. Interacts with PARP1. Interacts with XRCC4. Interacts (via KBM motif) with XRCC5 and XRCC6; promoting recruitment to DNA damage sites. Interacts with XRCC1. Interacts (via C-terminal disordered region) with histones; interacts with histone H2A, H2B and H3-H4. Poly-ADP-ribosylated. In addition to binding non covalently poly-ADP-ribose via its PBZ-type zinc fingers, the protein is also covalently poly-ADP-ribosylated by PARP1. Post-translationally, phosphorylated in an ATM-dependent manner upon double-strand DNA break.

The protein localises to the nucleus. The protein resides in the chromosome. Its subcellular location is the cytoplasm. It localises to the cytosol. Its function is as follows. Histone chaperone involved in single-strand and double-strand DNA break repair. Recruited to sites of DNA damage through interaction with branched poly-ADP-ribose chains, a polymeric post-translational modification synthesized transiently at sites of chromosomal damage to accelerate DNA strand break repair reactions. Following recruitment to DNA damage sites, acts as a histone chaperone that mediates histone eviction during DNA repair and promotes recruitment of histone variant MACROH2A1. Also has a nuclease activity: displays apurinic-apyrimidinic (AP) endonuclease and 3'-5' exonuclease activities in vitro. Also able to introduce nicks at hydroxyuracil and other types of pyrimidine base damage. Together with PARP3, promotes the retention of the LIG4-XRCC4 complex on chromatin and accelerate DNA ligation during non-homologous end-joining (NHEJ). Also acts as a negative regulator of cell pluripotency by promoting histone exchange. Required for the embryo implantation during the epithelial to mesenchymal transition in females. The chain is Aprataxin and PNK-like factor (APLF) from Bos taurus (Bovine).